The sequence spans 276 residues: Outer membrane lipoprotein 2 (276 aa).

An N-terminal signal peptide occupies residues 1-19 (MNFKKLLGVALVSALALTA). A lipid anchor (N-palmitoyl cysteine) is attached at Cys-20. Cys-20 carries S-diacylglycerol cysteine lipidation.

This sequence belongs to the NlpA lipoprotein family.

It is found in the cell outer membrane. The polypeptide is Outer membrane lipoprotein 2 (plpB) (Mannheimia haemolytica (Pasteurella haemolytica)).